Here is a 424-residue protein sequence, read N- to C-terminus: UPF0761 membrane protein Smal_0716 (424 aa).

A run of 6 helical transmembrane segments spans residues 48 to 68, 101 to 121, 144 to 164, 181 to 201, 216 to 236, and 251 to 271; these read VFAL…FPVF, SAGQ…LITL, FLVY…SLAV, WLAD…CITL, AVPG…GIGA, and VAFV…VLLG.

The protein belongs to the UPF0761 family.

The protein resides in the cell inner membrane. This Stenotrophomonas maltophilia (strain R551-3) protein is UPF0761 membrane protein Smal_0716.